A 119-amino-acid polypeptide reads, in one-letter code: Immunoglobulin heavy variable 2-26 (119 aa).

The signal sequence occupies residues 1-19; it reads MDTLCYTLLLLTTPSWVLS. Q20 is subject to Pyrrolidone carboxylic acid. Residues 20 to 44 are framework-1; that stretch reads QVTLKESGPVLVKPTETLTLTCTVS. Positions 20–119 constitute an Ig-like domain; sequence QVTLKESGPV…DTATYYCARI (100 aa). C41 and C116 are disulfide-bonded. The interval 45 to 54 is complementarity-determining-1; that stretch reads GFSLSNARMG. Residues 55–71 form a framework-2 region; sequence VSWIRQPPGKALEWLAH. A complementarity-determining-2 region spans residues 72–78; that stretch reads IFSNDEK. Residues 79 to 116 are framework-3; that stretch reads SYSTSLKSRLTISKDTSKSQVVLTMTNMDPVDTATYYC. Residues 117-119 are complementarity-determining-3; the sequence is ARI.

Immunoglobulins are composed of two identical heavy chains and two identical light chains; disulfide-linked.

Its subcellular location is the secreted. The protein resides in the cell membrane. In terms of biological role, v region of the variable domain of immunoglobulin heavy chains that participates in the antigen recognition. Immunoglobulins, also known as antibodies, are membrane-bound or secreted glycoproteins produced by B lymphocytes. In the recognition phase of humoral immunity, the membrane-bound immunoglobulins serve as receptors which, upon binding of a specific antigen, trigger the clonal expansion and differentiation of B lymphocytes into immunoglobulins-secreting plasma cells. Secreted immunoglobulins mediate the effector phase of humoral immunity, which results in the elimination of bound antigens. The antigen binding site is formed by the variable domain of one heavy chain, together with that of its associated light chain. Thus, each immunoglobulin has two antigen binding sites with remarkable affinity for a particular antigen. The variable domains are assembled by a process called V-(D)-J rearrangement and can then be subjected to somatic hypermutations which, after exposure to antigen and selection, allow affinity maturation for a particular antigen. This Homo sapiens (Human) protein is Immunoglobulin heavy variable 2-26.